The chain runs to 296 residues: Lipoyl synthase (296 aa).

The [4Fe-4S] cluster site is built by C34, C39, C45, C60, C64, C67, and S276. The Radical SAM core domain occupies 46-265; the sequence is WGEGTATFMI…GEVALSMGFK (220 aa).

It belongs to the radical SAM superfamily. Lipoyl synthase family. Requires [4Fe-4S] cluster as cofactor.

Its subcellular location is the cytoplasm. The catalysed reaction is [[Fe-S] cluster scaffold protein carrying a second [4Fe-4S](2+) cluster] + N(6)-octanoyl-L-lysyl-[protein] + 2 oxidized [2Fe-2S]-[ferredoxin] + 2 S-adenosyl-L-methionine + 4 H(+) = [[Fe-S] cluster scaffold protein] + N(6)-[(R)-dihydrolipoyl]-L-lysyl-[protein] + 4 Fe(3+) + 2 hydrogen sulfide + 2 5'-deoxyadenosine + 2 L-methionine + 2 reduced [2Fe-2S]-[ferredoxin]. The protein operates within protein modification; protein lipoylation via endogenous pathway; protein N(6)-(lipoyl)lysine from octanoyl-[acyl-carrier-protein]: step 2/2. Its function is as follows. Catalyzes the radical-mediated insertion of two sulfur atoms into the C-6 and C-8 positions of the octanoyl moiety bound to the lipoyl domains of lipoate-dependent enzymes, thereby converting the octanoylated domains into lipoylated derivatives. This is Lipoyl synthase from Pyrobaculum arsenaticum (strain DSM 13514 / JCM 11321 / PZ6).